We begin with the raw amino-acid sequence, 227 residues long: MSEGSVIFKGSLNGLTIIMKEEEDYDSILKQIEDKIASSGRFFKGAILSVKYRGKKLTEEQERKLFELLRDKSGAKIKSLEEDTEEPVKPEPVQQQPRFRSKIRMSNFYFKGLEEGITKFHRGTVRSGQLVSFDGNLVIIGDVNPGGEVCATGHVIVMGSLRGMVHAGANGNREALVVALNLQPTQLRIADVITRPPDEKETVGQFFPELAYIKDGMVYIERYLPAR.

It belongs to the MinC family. Interacts with MinD and FtsZ.

Functionally, cell division inhibitor that blocks the formation of polar Z ring septums. Rapidly oscillates between the poles of the cell to destabilize FtsZ filaments that have formed before they mature into polar Z rings. Prevents FtsZ polymerization. In Acetivibrio thermocellus (strain ATCC 27405 / DSM 1237 / JCM 9322 / NBRC 103400 / NCIMB 10682 / NRRL B-4536 / VPI 7372) (Clostridium thermocellum), this protein is Probable septum site-determining protein MinC.